A 148-amino-acid chain; its full sequence is Iron/alpha-ketoglutarate-dependent dioxygenase ausU (148 aa).

Positions 45 and 47 each coordinate Fe cation.

Belongs to the PhyH family. As to quaternary structure, homodimer. Fe cation is required as a cofactor.

Its pathway is secondary metabolite biosynthesis; terpenoid biosynthesis. In terms of biological role, iron/alpha-ketoglutarate-dependent dioxygenase; part of the gene cluster B that mediates the biosynthesis of austinol and dehydroaustinol, two fungal meroterpenoids. The first step of the pathway is the synthesis of 3,5-dimethylorsellinic acid by the polyketide synthase ausA. 3,5-dimethylorsellinic acid is then prenylated by the polyprenyl transferase ausN. Further epoxidation by the FAD-dependent monooxygenase ausM and cyclization by the probable terpene cyclase ausL lead to the formation of protoaustinoid A. Protoaustinoid A is then oxidized to spiro-lactone preaustinoid A3 by the combined action of the FAD-binding monooxygenases ausB and ausC, and the dioxygenase ausE. Acid-catalyzed keto-rearrangement and ring contraction of the tetraketide portion of preaustinoid A3 by ausJ lead to the formation of preaustinoid A4. The aldo-keto reductase ausK, with the help of ausH, is involved in the next step by transforming preaustinoid A4 into isoaustinone which is in turn hydroxylated by the P450 monooxygenase ausI to form austinolide. Finally, the cytochrome P450 monooxygenase ausG modifies austinolide to austinol. Austinol can be further modified to dehydroaustinol which forms a diffusible complex with diorcinol that initiates conidiation. Due to genetic rearrangements of the clusters and the subsequent loss of some enzymes, the end products of the Emericella nidulans austinoid biosynthesis clusters are austinol and dehydroaustinol, even if additional enzymes, such as the O-acetyltransferase ausQ and the cytochrome P450 monooxygenase ausR are still functional. This is Iron/alpha-ketoglutarate-dependent dioxygenase ausU from Emericella nidulans (strain FGSC A4 / ATCC 38163 / CBS 112.46 / NRRL 194 / M139) (Aspergillus nidulans).